A 295-amino-acid polypeptide reads, in one-letter code: tRNA-cytidine(32) 2-sulfurtransferase (295 aa).

The short motif at 63–68 (SGGKDS) is the PP-loop motif element. [4Fe-4S] cluster-binding residues include Cys-138, Cys-141, and Cys-229.

It belongs to the TtcA family. Homodimer. Mg(2+) is required as a cofactor. Requires [4Fe-4S] cluster as cofactor.

It is found in the cytoplasm. The enzyme catalyses cytidine(32) in tRNA + S-sulfanyl-L-cysteinyl-[cysteine desulfurase] + AH2 + ATP = 2-thiocytidine(32) in tRNA + L-cysteinyl-[cysteine desulfurase] + A + AMP + diphosphate + H(+). It participates in tRNA modification. In terms of biological role, catalyzes the ATP-dependent 2-thiolation of cytidine in position 32 of tRNA, to form 2-thiocytidine (s(2)C32). The sulfur atoms are provided by the cysteine/cysteine desulfurase (IscS) system. The sequence is that of tRNA-cytidine(32) 2-sulfurtransferase from Mesorhizobium japonicum (strain LMG 29417 / CECT 9101 / MAFF 303099) (Mesorhizobium loti (strain MAFF 303099)).